Consider the following 510-residue polypeptide: Pentatricopeptide repeat-containing protein At1g71060, mitochondrial (510 aa).

The transit peptide at Met1–Leu14 directs the protein to the mitochondrion. PPR repeat units lie at residues Thr127–Lys157, Ser161–Met195, Glu196–Pro230, Asp231–Pro265, Asp266–Pro300, Ser301–Leu335, Glu336–Pro370, Asn371–Glu401, Thr403–Pro437, and Gly438–Pro472.

The protein belongs to the PPR family. P subfamily.

It localises to the mitochondrion. The protein is Pentatricopeptide repeat-containing protein At1g71060, mitochondrial of Arabidopsis thaliana (Mouse-ear cress).